The sequence spans 432 residues: Adenosine 3'-phospho 5'-phosphosulfate transporter 1 (432 aa).

Helical transmembrane passes span 5-25 (WWAV…ETPE), 40-60 (VVNA…VQYF), 109-129 (ALKL…WGVL), 154-174 (FLVL…CVLC), 238-258 (WEYL…LSSG), 265-285 (PATT…DSFT), 299-319 (SVQM…GSLL), 353-373 (LFIF…IMTL), and 387-407 (GHTV…ALLL). Ser-427 bears the Phosphoserine mark.

It belongs to the nucleotide-sugar transporter family. SLC35B subfamily.

It localises to the golgi apparatus membrane. The enzyme catalyses 3'-phosphoadenylyl sulfate(in) + adenosine 3',5'-bisphosphate(out) = 3'-phosphoadenylyl sulfate(out) + adenosine 3',5'-bisphosphate(in). Probably functions as a 3'-phosphoadenylyl sulfate:adenosine 3',5'-bisphosphate antiporter at the Golgi membranes. Mediates the transport from the cytosol into the lumen of the Golgi of 3'-phosphoadenylyl sulfate/adenosine 3'-phospho 5'-phosphosulfate (PAPS), a universal sulfuryl donor for sulfation events that take place in that compartment. This chain is Adenosine 3'-phospho 5'-phosphosulfate transporter 1, found in Pongo abelii (Sumatran orangutan).